The following is a 176-amino-acid chain: NAD(P)H-quinone oxidoreductase subunit J (176 aa).

Belongs to the complex I 30 kDa subunit family. NDH-1 can be composed of about 15 different subunits; different subcomplexes with different compositions have been identified which probably have different functions.

It localises to the cellular thylakoid membrane. It carries out the reaction a plastoquinone + NADH + (n+1) H(+)(in) = a plastoquinol + NAD(+) + n H(+)(out). The enzyme catalyses a plastoquinone + NADPH + (n+1) H(+)(in) = a plastoquinol + NADP(+) + n H(+)(out). NDH-1 shuttles electrons from an unknown electron donor, via FMN and iron-sulfur (Fe-S) centers, to quinones in the respiratory and/or the photosynthetic chain. The immediate electron acceptor for the enzyme in this species is believed to be plastoquinone. Couples the redox reaction to proton translocation, and thus conserves the redox energy in a proton gradient. Cyanobacterial NDH-1 also plays a role in inorganic carbon-concentration. This chain is NAD(P)H-quinone oxidoreductase subunit J, found in Prochlorococcus marinus subsp. pastoris (strain CCMP1986 / NIES-2087 / MED4).